A 200-amino-acid chain; its full sequence is Isochorismatase family protein 2A (200 aa).

The protein belongs to the isochorismatase family.

This chain is Isochorismatase family protein 2A, found in Dictyostelium discoideum (Social amoeba).